Here is a 131-residue protein sequence, read N- to C-terminus: MLGSLSWEHMLVLVVVGLVVLGPERLPGAIRWTSNALRQARDYLSGVTTQLREDLGPEFDDLRVPLSELQKLRGMTPRAALTKHLLDGDDSFLTGAFDRPVNGAAAQPPPAPAPPPEPHRPGQTPFDADAT.

The helical transmembrane segment at 2 to 22 (LGSLSWEHMLVLVVVGLVVLG) threads the bilayer. The tract at residues 96–131 (AFDRPVNGAAAQPPPAPAPPPEPHRPGQTPFDADAT) is disordered. Positions 107 to 116 (QPPPAPAPPP) are enriched in pro residues.

It belongs to the TatB family. As to quaternary structure, the Tat system comprises two distinct complexes: a TatABC complex, containing multiple copies of TatA, TatB and TatC subunits, and a separate TatA complex, containing only TatA subunits. Substrates initially bind to the TatABC complex, which probably triggers association of the separate TatA complex to form the active translocon.

The protein localises to the cell membrane. Its function is as follows. Part of the twin-arginine translocation (Tat) system that transports large folded proteins containing a characteristic twin-arginine motif in their signal peptide across membranes. Together with TatC, TatB is part of a receptor directly interacting with Tat signal peptides. TatB may form an oligomeric binding site that transiently accommodates folded Tat precursor proteins before their translocation. This is Sec-independent protein translocase protein TatB from Mycobacterium avium (strain 104).